The following is a 266-amino-acid chain: Large ribosomal subunit protein uL4 (266 aa).

This sequence belongs to the universal ribosomal protein uL4 family. Part of the 50S ribosomal subunit.

In terms of biological role, one of the primary rRNA binding proteins, this protein initially binds near the 5'-end of the 23S rRNA. It is important during the early stages of 50S assembly. It makes multiple contacts with different domains of the 23S rRNA in the assembled 50S subunit and ribosome. Forms part of the polypeptide exit tunnel. The protein is Large ribosomal subunit protein uL4 of Sulfurisphaera tokodaii (strain DSM 16993 / JCM 10545 / NBRC 100140 / 7) (Sulfolobus tokodaii).